Here is a 279-residue protein sequence, read N- to C-terminus: Phosphatidylglycerol--prolipoprotein diacylglyceryl transferase (279 aa).

4 helical membrane passes run 4–24 (IGPL…FLGY), 44–64 (VVFW…VLTS), 76–96 (LYIW…GLTF), and 104–124 (GYPL…GIVA). Arg126 provides a ligand contact to a 1,2-diacyl-sn-glycero-3-phospho-(1'-sn-glycerol). A run of 3 helical transmembrane segments spans residues 182–202 (LTQV…LYWL), 206–226 (PFYG…RSVL), and 245–265 (LGIG…LLSL).

Belongs to the Lgt family.

It is found in the cell inner membrane. It catalyses the reaction L-cysteinyl-[prolipoprotein] + a 1,2-diacyl-sn-glycero-3-phospho-(1'-sn-glycerol) = an S-1,2-diacyl-sn-glyceryl-L-cysteinyl-[prolipoprotein] + sn-glycerol 1-phosphate + H(+). It participates in protein modification; lipoprotein biosynthesis (diacylglyceryl transfer). Its function is as follows. Catalyzes the transfer of the diacylglyceryl group from phosphatidylglycerol to the sulfhydryl group of the N-terminal cysteine of a prolipoprotein, the first step in the formation of mature lipoproteins. This Thermus thermophilus (strain ATCC 27634 / DSM 579 / HB8) protein is Phosphatidylglycerol--prolipoprotein diacylglyceryl transferase.